Here is a 425-residue protein sequence, read N- to C-terminus: Protein disulfide isomerase-like 5-3 (425 aa).

A signal peptide spans 1–28; that stretch reads MGKPTLPPVVVVVVLLLLVVVLPATTCG. The Thioredoxin domain occupies 29–153; that stretch reads ADAGGGGEAE…LVENLKKLVA (125 aa). Active-site nucleophile residues include Cys75 and Cys78. Cys75 and Cys78 are joined by a disulfide. The chain crosses the membrane as a helical span at residues 386–406; that stretch reads LLGVNAVYILVFLVAVLVLLM.

It belongs to the protein disulfide isomerase family.

It localises to the membrane. Functionally, acts as a protein-folding catalyst that interacts with nascent polypeptides to catalyze the formation, isomerization, and reduction or oxidation of disulfide bonds. May play a role in storage protein biogenesis. The polypeptide is Protein disulfide isomerase-like 5-3 (PDIL5-3) (Oryza sativa subsp. japonica (Rice)).